A 336-amino-acid polypeptide reads, in one-letter code: tRNA N6-adenosine threonylcarbamoyltransferase (336 aa).

Fe cation is bound by residues His-111 and His-115. Substrate contacts are provided by residues 134–138, Asp-167, Gly-180, Asp-184, and Asn-272; that span reads VVSGG. Asp-300 is a Fe cation binding site.

Belongs to the KAE1 / TsaD family. Fe(2+) serves as cofactor.

It is found in the cytoplasm. The catalysed reaction is L-threonylcarbamoyladenylate + adenosine(37) in tRNA = N(6)-L-threonylcarbamoyladenosine(37) in tRNA + AMP + H(+). Its function is as follows. Required for the formation of a threonylcarbamoyl group on adenosine at position 37 (t(6)A37) in tRNAs that read codons beginning with adenine. Is involved in the transfer of the threonylcarbamoyl moiety of threonylcarbamoyl-AMP (TC-AMP) to the N6 group of A37, together with TsaE and TsaB. TsaD likely plays a direct catalytic role in this reaction. In Caldicellulosiruptor saccharolyticus (strain ATCC 43494 / DSM 8903 / Tp8T 6331), this protein is tRNA N6-adenosine threonylcarbamoyltransferase.